The primary structure comprises 398 residues: Cap-specific mRNA (nucleoside-2'-O-)-methyltransferase 1 (398 aa).

The RrmJ-type SAM-dependent 2'-O-MTase domain maps to 85 to 298; it reads QFSNRAGHKL…ERYLVCVDFL (214 aa). The S-adenosyl-L-methionine site is built by Gly-132 and Asp-211. Lys-252 acts as the Proton acceptor in catalysis. The segment at 371-398 is disordered; the sequence is LKAKETTTRTSAESDDSPLSSRESCKDG.

It carries out the reaction a 5'-end (N(7)-methyl 5'-triphosphoguanosine)-ribonucleoside in mRNA + S-adenosyl-L-methionine = a 5'-end (N(7)-methyl 5'-triphosphoguanosine)-(2'-O-methyl-ribonucleoside) in mRNA + S-adenosyl-L-homocysteine + H(+). S-adenosyl-L-methionine-dependent methyltransferase that mediates RNA cap1 2'-O-ribose methylation to the 5'-cap structure of RNAs. Methylates the ribose of the first nucleotide of a m(7)GpppG-capped mRNA to produce m(7)GpppNmp (cap1). The sequence is that of Cap-specific mRNA (nucleoside-2'-O-)-methyltransferase 1 from Leishmania braziliensis.